The sequence spans 289 residues: ATP synthase gamma chain (289 aa).

This sequence belongs to the ATPase gamma chain family. F-type ATPases have 2 components, CF(1) - the catalytic core - and CF(0) - the membrane proton channel. CF(1) has five subunits: alpha(3), beta(3), gamma(1), delta(1), epsilon(1). CF(0) has three main subunits: a, b and c.

The protein localises to the cell inner membrane. Its function is as follows. Produces ATP from ADP in the presence of a proton gradient across the membrane. The gamma chain is believed to be important in regulating ATPase activity and the flow of protons through the CF(0) complex. This Acinetobacter baylyi (strain ATCC 33305 / BD413 / ADP1) protein is ATP synthase gamma chain.